We begin with the raw amino-acid sequence, 643 residues long: Zinc finger protein 23 (643 aa).

The KRAB domain maps to 1–43 (MLENYGNVASLGFPLLKPAVISQLEGGSELGGSSPLAAGTGLQ). A Glycyl lysine isopeptide (Lys-Gly) (interchain with G-Cter in SUMO2) cross-link involves residue Lys-157. The C2H2-type 1; degenerate zinc finger occupies 168–190 (FKCEELVEPFRCDSQLIQHQENN). C2H2-type zinc fingers lie at residues 196–218 (YQCS…QRLH), 224–246 (FKCV…QTIH), 252–274 (YQCK…QRIH), 280–302 (YQCK…QRVH), 308–330 (YECN…QRIH), 336–358 (YECN…QSIH), 364–386 (YQCK…QRIH), 392–414 (YECT…QRIH), 420–442 (YECN…LRIH), 448–470 (YECN…QRIH), 476–498 (FECN…HRIH), 504–526 (YQCK…QRIH), 532–554 (FKCM…QRIH), 560–582 (FQCK…QRSH), 588–610 (FRCV…QTVH), and 616–638 (YMCS…QSVH).

This sequence belongs to the krueppel C2H2-type zinc-finger protein family.

The protein localises to the nucleus. May be involved in transcriptional regulation. May have a role in embryonic development. The chain is Zinc finger protein 23 (ZNF23) from Homo sapiens (Human).